Consider the following 433-residue polypeptide: Enolase (433 aa).

A (2R)-2-phosphoglycerate-binding site is contributed by glutamine 167. The active-site Proton donor is the glutamate 209. Position 246 (aspartate 246) interacts with Mg(2+). Residues phenylalanine 252 to tyrosine 260 carry the Plasminogen-binding motif motif. Residues glutamate 291 and aspartate 318 each contribute to the Mg(2+) site. The (2R)-2-phosphoglycerate site is built by lysine 343, arginine 372, serine 373, and lysine 394. The active-site Proton acceptor is the lysine 343.

This sequence belongs to the enolase family. As to quaternary structure, component of the RNA degradosome, a multiprotein complex involved in RNA processing and mRNA degradation. Requires Mg(2+) as cofactor.

The protein resides in the cell inner membrane. Its subcellular location is the cell outer membrane. The protein localises to the cytoplasm. It localises to the secreted. It is found in the cell surface. The enzyme catalyses (2R)-2-phosphoglycerate = phosphoenolpyruvate + H2O. It participates in carbohydrate degradation; glycolysis; pyruvate from D-glyceraldehyde 3-phosphate: step 4/5. Functionally, catalyzes the reversible conversion of 2-phosphoglycerate (2-PG) into phosphoenolpyruvate (PEP). It is essential for the degradation of carbohydrates via glycolysis. Its function is as follows. 'Moonlights' as a plasminogen receptor and plasmin activator. Binds host (human) plasminogen in vitro. Binds human plasmin and plasminogen on the cell surface; enhances the activity of host tissue-specific plasminogen activator (tPA). Plasmin bound to bacteria is partially protected from its physiological inhibitor alpha-2AP (SERPINF2). The chain is Enolase from Aeromonas hydrophila.